The chain runs to 399 residues: Phosphoglycerate kinase (399 aa).

Substrate contacts are provided by residues Asp-22 to Asn-24, Arg-38, His-61 to Arg-64, Arg-120, and Arg-153. ATP-binding positions include Lys-204, Glu-326, and Gly-352–Thr-355.

The protein belongs to the phosphoglycerate kinase family. Monomer.

The protein resides in the cytoplasm. The catalysed reaction is (2R)-3-phosphoglycerate + ATP = (2R)-3-phospho-glyceroyl phosphate + ADP. It functions in the pathway carbohydrate degradation; glycolysis; pyruvate from D-glyceraldehyde 3-phosphate: step 2/5. This chain is Phosphoglycerate kinase, found in Geotalea uraniireducens (strain Rf4) (Geobacter uraniireducens).